The chain runs to 117 residues: DNA-directed RNA polymerase subunit omega (117 aa).

This sequence belongs to the RNA polymerase subunit omega family. In terms of assembly, the RNAP catalytic core consists of 2 alpha, 1 beta, 1 beta' and 1 omega subunit. When a sigma factor is associated with the core the holoenzyme is formed, which can initiate transcription.

It carries out the reaction RNA(n) + a ribonucleoside 5'-triphosphate = RNA(n+1) + diphosphate. Promotes RNA polymerase assembly. Latches the N- and C-terminal regions of the beta' subunit thereby facilitating its interaction with the beta and alpha subunits. The chain is DNA-directed RNA polymerase subunit omega from Ruegeria sp. (strain TM1040) (Silicibacter sp.).